We begin with the raw amino-acid sequence, 534 residues long: Alkaline serine exoprotease A (534 aa).

The first 21 residues, 1–21 (MLKKLLSCCITSALCFHSSLA), serve as a signal peptide directing secretion. The propeptide occupies 22–141 (FSQPNEIADS…LSLDPIVSAD (120 aa)). An Inhibitor I9 domain is found at 57–134 (RYIVVFQQPQ…YIEQDRILSL (78 aa)). In terms of domain architecture, Peptidase S8 spans 148-419 (IWGLDRIDQR…KLLYSLTDAD (272 aa)). Catalysis depends on charge relay system residues Asp180, His213, and Ser363. The segment at 423–442 (DCGGPDPTPDPEGKLTSGVP) is disordered.

The protein belongs to the peptidase S8 family.

This Vibrio alginolyticus protein is Alkaline serine exoprotease A (proA).